Consider the following 217-residue polypeptide: Orotidine 5'-phosphate decarboxylase (217 aa).

Substrate is bound by residues Asp-14, Lys-36, 64-73 (DFKVADIPST), Ser-120, 172-182 (PGVGAQGGNLS), Gly-197, and Arg-198. Lys-66 (proton donor) is an active-site residue.

Belongs to the OMP decarboxylase family. Type 1 subfamily. As to quaternary structure, homodimer.

It catalyses the reaction orotidine 5'-phosphate + H(+) = UMP + CO2. It participates in pyrimidine metabolism; UMP biosynthesis via de novo pathway; UMP from orotate: step 2/2. Functionally, catalyzes the decarboxylation of orotidine 5'-monophosphate (OMP) to uridine 5'-monophosphate (UMP). This is Orotidine 5'-phosphate decarboxylase from Methanococcus maripaludis (strain DSM 14266 / JCM 13030 / NBRC 101832 / S2 / LL).